A 661-amino-acid chain; its full sequence is SUMO-activating enzyme subunit 2 (661 aa).

ATP contacts are provided by residues 29–34 (GAGGIG), Asp53, 61–64 (NLNR), Lys77, and 122–127 (DNISAR). Zn(2+)-binding residues include Cys163 and Cys166. The active-site Glycyl thioester intermediate is Cys178. Cys436 and Cys439 together coordinate Zn(2+). The segment at 545–661 (KKQQQKEKDQ…SKKLKSNLQD (117 aa)) is disordered. Residues 548–563 (QQKEKDQKEGKTTTIE) are compositionally biased toward basic and acidic residues. Composition is skewed to low complexity over residues 577–607 (TSQT…NNNN) and 623–634 (SSTTTSSATPSI).

Belongs to the ubiquitin-activating E1 family. Heterodimer of sae1 and sae2. The complex binds sumo via sae2.

Its subcellular location is the nucleus. Its pathway is protein modification; protein sumoylation. Its function is as follows. The dimeric enzyme acts as an E1 ligase for sumo. It mediates ATP-dependent activation of sumo and formation of a thioester with a conserved cysteine residue on sae2. This Dictyostelium discoideum (Social amoeba) protein is SUMO-activating enzyme subunit 2 (uba2).